A 371-amino-acid polypeptide reads, in one-letter code: Chaperone protein DnaJ (371 aa).

In terms of domain architecture, J spans 5 to 69; that stretch reads DYYEVLGLSK…QKRAQYDQFG (65 aa). The CR-type zinc finger occupies 133 to 215; sequence GKELNVEIPV…CHGSGKVRKR (83 aa). Residues cysteine 146, cysteine 149, cysteine 163, cysteine 166, cysteine 189, cysteine 192, cysteine 203, and cysteine 206 each coordinate Zn(2+). CXXCXGXG motif repeat units follow at residues 146–153, 163–170, 189–196, and 203–210; these read CDTCKGSG, CKHCSGSG, CGHCSGTG, and CTTCHGSG.

The protein belongs to the DnaJ family. In terms of assembly, homodimer. The cofactor is Zn(2+).

The protein resides in the cytoplasm. Participates actively in the response to hyperosmotic and heat shock by preventing the aggregation of stress-denatured proteins and by disaggregating proteins, also in an autonomous, DnaK-independent fashion. Unfolded proteins bind initially to DnaJ; upon interaction with the DnaJ-bound protein, DnaK hydrolyzes its bound ATP, resulting in the formation of a stable complex. GrpE releases ADP from DnaK; ATP binding to DnaK triggers the release of the substrate protein, thus completing the reaction cycle. Several rounds of ATP-dependent interactions between DnaJ, DnaK and GrpE are required for fully efficient folding. Also involved, together with DnaK and GrpE, in the DNA replication of plasmids through activation of initiation proteins. The polypeptide is Chaperone protein DnaJ (Bacillus cereus (strain G9842)).